The primary structure comprises 255 residues: UPF0246 protein Cphy_1568 (255 aa).

This sequence belongs to the UPF0246 family.

In Lachnoclostridium phytofermentans (strain ATCC 700394 / DSM 18823 / ISDg) (Clostridium phytofermentans), this protein is UPF0246 protein Cphy_1568.